The sequence spans 174 residues: NADH-quinone oxidoreductase subunit B 2 (174 aa).

Positions 38, 39, 104, and 133 each coordinate [4Fe-4S] cluster.

Belongs to the complex I 20 kDa subunit family. NDH-1 is composed of 14 different subunits. Subunits NuoB, C, D, E, F, and G constitute the peripheral sector of the complex. [4Fe-4S] cluster is required as a cofactor.

It is found in the cell membrane. The enzyme catalyses a quinone + NADH + 5 H(+)(in) = a quinol + NAD(+) + 4 H(+)(out). In terms of biological role, NDH-1 shuttles electrons from NADH, via FMN and iron-sulfur (Fe-S) centers, to quinones in the respiratory chain. The immediate electron acceptor for the enzyme in this species is believed to be ubiquinone. Couples the redox reaction to proton translocation (for every two electrons transferred, four hydrogen ions are translocated across the cytoplasmic membrane), and thus conserves the redox energy in a proton gradient. The sequence is that of NADH-quinone oxidoreductase subunit B 2 from Chloroflexus aurantiacus (strain ATCC 29366 / DSM 635 / J-10-fl).